A 65-amino-acid chain; its full sequence is Metallothionein-like protein type 3 (65 aa).

It belongs to the metallothionein superfamily. Type 15 family.

Functionally, metallothioneins have a high content of cysteine residues that bind various heavy metals. This Carica papaya (Papaya) protein is Metallothionein-like protein type 3.